The chain runs to 179 residues: ATP synthase subunit delta (179 aa).

It belongs to the ATPase delta chain family. As to quaternary structure, F-type ATPases have 2 components, F(1) - the catalytic core - and F(0) - the membrane proton channel. F(1) has five subunits: alpha(3), beta(3), gamma(1), delta(1), epsilon(1). F(0) has three main subunits: a(1), b(2) and c(10-14). The alpha and beta chains form an alternating ring which encloses part of the gamma chain. F(1) is attached to F(0) by a central stalk formed by the gamma and epsilon chains, while a peripheral stalk is formed by the delta and b chains.

It localises to the cell inner membrane. In terms of biological role, f(1)F(0) ATP synthase produces ATP from ADP in the presence of a proton or sodium gradient. F-type ATPases consist of two structural domains, F(1) containing the extramembraneous catalytic core and F(0) containing the membrane proton channel, linked together by a central stalk and a peripheral stalk. During catalysis, ATP synthesis in the catalytic domain of F(1) is coupled via a rotary mechanism of the central stalk subunits to proton translocation. Its function is as follows. This protein is part of the stalk that links CF(0) to CF(1). It either transmits conformational changes from CF(0) to CF(1) or is implicated in proton conduction. The sequence is that of ATP synthase subunit delta from Cupriavidus pinatubonensis (strain JMP 134 / LMG 1197) (Cupriavidus necator (strain JMP 134)).